Reading from the N-terminus, the 147-residue chain is Ribosomal RNA large subunit methyltransferase H (147 aa).

S-adenosyl-L-methionine-binding positions include leucine 66, glycine 95, and leucine 114–phenylalanine 119.

Belongs to the RNA methyltransferase RlmH family. As to quaternary structure, homodimer.

It localises to the cytoplasm. The enzyme catalyses pseudouridine(1915) in 23S rRNA + S-adenosyl-L-methionine = N(3)-methylpseudouridine(1915) in 23S rRNA + S-adenosyl-L-homocysteine + H(+). Its function is as follows. Specifically methylates the pseudouridine at position 1915 (m3Psi1915) in 23S rRNA. The polypeptide is Ribosomal RNA large subunit methyltransferase H (Synechococcus sp. (strain RCC307)).